The sequence spans 135 residues: Large ribosomal subunit protein uL18 (135 aa).

The tract at residues M1–S25 is disordered.

The protein belongs to the universal ribosomal protein uL18 family. As to quaternary structure, part of the 50S ribosomal subunit; part of the 5S rRNA/L5/L18/L25 subcomplex. Contacts the 5S and 23S rRNAs.

Its function is as follows. This is one of the proteins that bind and probably mediate the attachment of the 5S RNA into the large ribosomal subunit, where it forms part of the central protuberance. The polypeptide is Large ribosomal subunit protein uL18 (Nocardia farcinica (strain IFM 10152)).